The primary structure comprises 305 residues: Acetaldehyde dehydrogenase (305 aa).

12–15 contacts NAD(+); it reads SGNI. The active-site Acyl-thioester intermediate is the Cys-127. Residues 158 to 166 and Asn-277 each bind NAD(+); that span reads SAGPGTRAN.

Belongs to the acetaldehyde dehydrogenase family.

The enzyme catalyses acetaldehyde + NAD(+) + CoA = acetyl-CoA + NADH + H(+). This is Acetaldehyde dehydrogenase from Mycolicibacterium paratuberculosis (strain ATCC BAA-968 / K-10) (Mycobacterium paratuberculosis).